Here is a 319-residue protein sequence, read N- to C-terminus: Cell surface A33 antigen (319 aa).

Residues 1–21 (MLGKAGSVVWMLCAIWVAADA) form the signal peptide. An Ig-like V-type domain is found at 22-134 (LTVETTQDIL…QDVNAKSRVR (113 aa)). Residues 22-235 (LTVETTQDIL…VAPRPPSMNI (214 aa)) lie on the Extracellular side of the membrane. 3 disulfide bridges follow: C43-C117, C146-C222, and C162-C211. N-linked (GlcNAc...) asparagine glycans are attached at residues N99, N112, N200, and N223. Positions 140 to 227 (PPSKPDCSIQ…GIESCNITVA (88 aa)) constitute an Ig-like C2-type domain. Residues 236–256 (ALYAGIAGGVFVALIIIGVIV) form a helical membrane-spanning segment. Residues 257 to 319 (YCCCCREKDD…GRSTPDQPFQ (63 aa)) lie on the Cytoplasmic side of the membrane. Composition is skewed to basic and acidic residues over residues 267-276 (KDQDREDARP) and 284-308 (PKKEQKEISRGREDEDDHRHEDRWS). The tract at residues 267-319 (KDQDREDARPNRAAYQVPKKEQKEISRGREDEDDHRHEDRWSSGRSTPDQPFQ) is disordered. The span at 309–319 (SGRSTPDQPFQ) shows a compositional bias: polar residues.

Post-translationally, palmitoylated.

It localises to the membrane. Functionally, may play a role in cell-cell recognition and signaling. This is Cell surface A33 antigen (Gpa33) from Mus musculus (Mouse).